The chain runs to 403 residues: Exodeoxyribonuclease 7 large subunit (403 aa).

The protein belongs to the XseA family. In terms of assembly, heterooligomer composed of large and small subunits.

The protein localises to the cytoplasm. It catalyses the reaction Exonucleolytic cleavage in either 5'- to 3'- or 3'- to 5'-direction to yield nucleoside 5'-phosphates.. Functionally, bidirectionally degrades single-stranded DNA into large acid-insoluble oligonucleotides, which are then degraded further into small acid-soluble oligonucleotides. The chain is Exodeoxyribonuclease 7 large subunit from Streptomyces griseus subsp. griseus (strain JCM 4626 / CBS 651.72 / NBRC 13350 / KCC S-0626 / ISP 5235).